The chain runs to 251 residues: Urease accessory protein UreF (251 aa).

Residues 1–20 (MAPAPDPAPAGSAAPDPASA) are disordered. Low complexity predominate over residues 9-20 (PAGSAAPDPASA).

It belongs to the UreF family. UreD, UreF and UreG form a complex that acts as a GTP-hydrolysis-dependent molecular chaperone, activating the urease apoprotein by helping to assemble the nickel containing metallocenter of UreC. The UreE protein probably delivers the nickel.

It localises to the cytoplasm. In terms of biological role, required for maturation of urease via the functional incorporation of the urease nickel metallocenter. The protein is Urease accessory protein UreF of Paracidovorax citrulli (strain AAC00-1) (Acidovorax citrulli).